Consider the following 249-residue polypeptide: Small ribosomal subunit protein uS4m (249 aa).

An S4 RNA-binding domain is found at 133-193 (RRLDIIIYRA…PEIVNLLRNQ (61 aa)).

The protein belongs to the universal ribosomal protein uS4 family.

It is found in the mitochondrion. The chain is Small ribosomal subunit protein uS4m (RPS4) from Reclinomonas americana.